The chain runs to 1436 residues: MGARASVLSGGKLDKWEKIRLRPRGKKRYKLKHIVWASRELERFAVNPSLLETAEGCRQILGQLQPALQTGSEELKSLYNAVATLYCVHQNIEVRDTKEALDKIEEEQNKSKKKAQQAAADTGNGSQVSQNYPIVQNLQGQMVHQAISPRTLNAWVKVVEEKAFSPEVIPMFSALSEGATPQDLNTMLNTVGGHQAAMQMLKETINEEAAEWDRLHPVHAGPIAPGQMREPRGSDIAGTTSTLQEQIGWMTNNPPIPVGEIYKRWIILGLNKIVRMYSPISILDIRQGPKEPFRDYVDRFYKTLRAEQASQDVKNWMTETFLVQNANPDCKTILKALGPAATLEEMMTACQGVGGPSHKARILAEAMSQVTNSATIMLQKGNFRDQRKIVKCFNCGKVGHIAKNCRAPRKKGCWKCGKEGHQMKDCTNEGRQANFLRENLAFPQGKARELSSEQTRANSPTRRELQVWGRDNSLSEAGEDRQGTVSFSFPQITLWQRPIVTVKIGGQLKEALLDTGADDTVLEEMNLPGKWKPKMIGGIGGFIKVRQYDQILIEICGHKAIGTVLVGPTPVNIIGRNLLTQIGCTLNFPISPIETVPVKLKPGMDGPKVKQWPLTEEKIKALVEICTEMEKEGKISKIGPENPYNTPVFAIKKKDSTKWRKLVDFRELNKRTQDFWEVQLGIPHPAGLKKKKSVTVLDVGDAYFSVPLDKEFRKYTAFTIPSINNETPRIRYQYNVLPQGWKGSPAIFQSSMTKILEPFKKQNPEIVIYQYMDDLYVGSDLEIGQHRIKIEELREHLLKWGFTTPDKKHQKEPPFLWMGYELHPDKWTVQPIVLPEKDSWTVNDIQKLVGKLNWASQIYAGIKVKQLCKLLRGTKALTEVVQLTKEAELELAENREILKEPVHGVYYDPSKDLIAEIQKQGQGQWTYQIYQEPFKNLKTGKYARMRGAHTNDVKQLTEAVQKVATESIVIWGKTPKFKLPIQKETWEAWWTEYWQATWIPEWEFVNTPPLVKLWYQLEKEPIIGAETFYVDGAANRETKLGKAGYVTDRGRQKVVSLTDTTNQKTELQAIHLALQDSGLEVNIVTDSQYALGIIQAQPDKSESELVSQIIEQLIKKEKVYLAWVPAHKGIGGNEQVDRLVSTGIRKVLFLDGIDKAQDEHEKYHSNWRAMASDFNLPPVVAKEIVASCDKCQLKGEAMHGQVDCSPGIWQLDCTHLEGKIILVAVHVASGYIEAEVIPAETGQETAYFILKLAGRWPVKVIHTDNGSNFTSTTVKAACWWAGIKQEFGIPYNPQSQGVVESMNKQLKQIIGQVRDQAEHLKTAVQMAVFIHNFKRKGGIGGYSAGERIVDIIATDIQTKELQKQITKIQNFRVYYRDSRDPLWKGHAKLLWKGEGAVVIQDNSDIKVVPRRKAKIIRDYGKQMAGDDCVASRQDED.

Gly-2 carries the N-myristoyl glycine; by host lipid modification. The interval 7-31 (VLSGGKLDKWEKIRLRPRGKKRYKL) is interaction with Gp41. Residues 8–43 (LSGGKLDKWEKIRLRPRGKKRYKLKHIVWASRELER) are interaction with host CALM1. The segment at 12–19 (KLDKWEKI) is interaction with host AP3D1. Positions 14–33 (DKWEKIRLRPRGKKRYKLKH) are interaction with membrane phosphatidylinositol 4,5-bisphosphate and RNA. The Nuclear export signal motif lies at 16 to 22 (WEKIRLR). The short motif at 26–32 (KKRYKLK) is the Nuclear localization signal element. Residues 73–77 (EELKS) are interaction with membrane phosphatidylinositol 4,5-bisphosphate. The segment at 106-128 (EEQNKSKKKAQQAAADTGNGSQV) is disordered. Residue Tyr-132 is modified to Phosphotyrosine; by host. An interaction with human PPIA/CYPA and NUP153 region spans residues 189–227 (NTVGGHQAAMQMLKETINEEAAEWDRLHPVHAGPIAPGQ). Residues 277-363 (YSPISILDIR…GGPSHKARIL (87 aa)) are dimerization/Multimerization of capsid protein p24. 2 CCHC-type zinc fingers span residues 390-407 (VKCF…NCRA) and 411-428 (KGCW…DCTN). The disordered stretch occupies residues 446 to 465 (KARELSSEQTRANSPTRREL). The segment at 490–494 (PQITL) is dimerization of protease. Positions 509–578 (KEALLDTGAD…TPVNIIGRNL (70 aa)) constitute a Peptidase A2 domain. Asp-514 acts as the For protease activity; shared with dimeric partner in catalysis. Dimerization of protease stretches follow at residues 538–544 (GIGGFIK) and 577–589 (NLLT…LNFP). The region spanning 632 to 822 (EGKISKIGPE…PPFLWMGYEL (191 aa)) is the Reverse transcriptase domain. Mg(2+) contacts are provided by Asp-698, Asp-773, and Asp-774. The interval 815–823 (FLWMGYELH) is RT 'primer grip'. A Tryptophan repeat motif motif is present at residues 986-1002 (WEAWWTEYWQATWIPEW). The region spanning 1022-1145 (IIGAETFYVD…VDRLVSTGIR (124 aa)) is the RNase H type-1 domain. Mg(2+) contacts are provided by Asp-1031, Glu-1066, Asp-1086, and Asp-1137. Residues 1151-1192 (DGIDKAQDEHEKYHSNWRAMASDFNLPPVVAKEIVASCDKCQ) form an Integrase-type zinc finger. 4 residues coordinate Zn(2+): His-1160, His-1164, Cys-1188, and Cys-1191. The region spanning 1202–1352 (VDCSPGIWQL…SAGERIVDII (151 aa)) is the Integrase catalytic domain. Residues Asp-1212, Asp-1264, and Glu-1300 each coordinate Mg(2+). The integrase-type DNA-binding region spans 1371 to 1418 (FRVYYRDSRDPLWKGHAKLLWKGEGAVVIQDNSDIKVVPRRKAKIIRD).

In terms of assembly, homotrimer; further assembles as hexamers of trimers. Interacts with gp41 (via C-terminus). Interacts with host CALM1; this interaction induces a conformational change in the Matrix protein, triggering exposure of the myristate group. Interacts with host AP3D1; this interaction allows the polyprotein trafficking to multivesicular bodies during virus assembly. Part of the pre-integration complex (PIC) which is composed of viral genome, matrix protein, Vpr and integrase. As to quaternary structure, homodimer; the homodimer further multimerizes as homohexamers or homopentamers. Interacts with human PPIA/CYPA; This interaction stabilizes the capsid. Interacts with human NUP153. Interacts with host PDZD8; this interaction stabilizes the capsid. Interacts with monkey TRIM5; this interaction destabilizes the capsid. Homodimer, whose active site consists of two apposed aspartic acid residues. In terms of assembly, heterodimer of p66 RT and p51 RT (RT p66/p51). Heterodimerization of RT is essential for DNA polymerase activity. The overall folding of the subdomains is similar in p66 RT and p51 RT but the spatial arrangements of the subdomains are dramatically different. As to quaternary structure, homotetramer; may further associate as a homohexadecamer. Part of the pre-integration complex (PIC) which is composed of viral genome, matrix protein, Vpr and integrase. Interacts with human SMARCB1/INI1 and human PSIP1/LEDGF isoform 1. Interacts with human KPNA3; this interaction might play a role in nuclear import of the pre-integration complex. Interacts with human NUP153; this interaction might play a role in nuclear import of the pre-integration complex. Mg(2+) serves as cofactor. Specific enzymatic cleavages by the viral protease yield mature proteins. The protease is released by autocatalytic cleavage. The polyprotein is cleaved during and after budding, this process is termed maturation. Proteolytic cleavage of p66 RT removes the RNase H domain to yield the p51 RT subunit. Nucleocapsid protein p7 might be further cleaved after virus entry. Post-translationally, tyrosine phosphorylated presumably in the virion by a host kinase. Phosphorylation is apparently not a major regulator of membrane association. In terms of processing, phosphorylated possibly by host MAPK1; this phosphorylation is necessary for Pin1-mediated virion uncoating. Methylated by host PRMT6, impairing its function by reducing RNA annealing and the initiation of reverse transcription.

Its subcellular location is the host cell membrane. The protein localises to the host endosome. The protein resides in the host multivesicular body. It is found in the virion membrane. It localises to the host nucleus. Its subcellular location is the host cytoplasm. The protein localises to the virion. The enzyme catalyses Specific for a P1 residue that is hydrophobic, and P1' variable, but often Pro.. It catalyses the reaction Endohydrolysis of RNA in RNA/DNA hybrids. Three different cleavage modes: 1. sequence-specific internal cleavage of RNA. Human immunodeficiency virus type 1 and Moloney murine leukemia virus enzymes prefer to cleave the RNA strand one nucleotide away from the RNA-DNA junction. 2. RNA 5'-end directed cleavage 13-19 nucleotides from the RNA end. 3. DNA 3'-end directed cleavage 15-20 nucleotides away from the primer terminus.. It carries out the reaction 3'-end directed exonucleolytic cleavage of viral RNA-DNA hybrid.. The catalysed reaction is DNA(n) + a 2'-deoxyribonucleoside 5'-triphosphate = DNA(n+1) + diphosphate. Its activity is regulated as follows. Protease: The viral protease is inhibited by many synthetic protease inhibitors (PIs), such as amprenavir, atazanavir, indinavir, loprinavir, nelfinavir, ritonavir and saquinavir. Use of protease inhibitors in tritherapy regimens permit more ambitious therapeutic strategies. Reverse transcriptase/ribonuclease H: RT can be inhibited either by nucleoside RT inhibitors (NRTIs) or by non nucleoside RT inhibitors (NNRTIs). NRTIs act as chain terminators, whereas NNRTIs inhibit DNA polymerization by binding a small hydrophobic pocket near the RT active site and inducing an allosteric change in this region. Classical NRTIs are abacavir, adefovir (PMEA), didanosine (ddI), lamivudine (3TC), stavudine (d4T), tenofovir (PMPA), zalcitabine (ddC), and zidovudine (AZT). Classical NNRTIs are atevirdine (BHAP U-87201E), delavirdine, efavirenz (DMP-266), emivirine (I-EBU), and nevirapine (BI-RG-587). The tritherapies used as a basic effective treatment of AIDS associate two NRTIs and one NNRTI. Functionally, mediates, with Gag polyprotein, the essential events in virion assembly, including binding the plasma membrane, making the protein-protein interactions necessary to create spherical particles, recruiting the viral Env proteins, and packaging the genomic RNA via direct interactions with the RNA packaging sequence (Psi). Gag-Pol polyprotein may regulate its own translation, by the binding genomic RNA in the 5'-UTR. At low concentration, the polyprotein would promote translation, whereas at high concentration, the polyprotein would encapsidate genomic RNA and then shut off translation. Targets the polyprotein to the plasma membrane via a multipartite membrane-binding signal, that includes its myristoylated N-terminus. Matrix protein is part of the pre-integration complex. Implicated in the release from host cell mediated by Vpu. Binds to RNA. Its function is as follows. Forms the conical core that encapsulates the genomic RNA-nucleocapsid complex in the virion. Most core are conical, with only 7% tubular. The core is constituted by capsid protein hexamer subunits. The core is disassembled soon after virion entry. Host restriction factors such as TRIM5-alpha or TRIMCyp bind retroviral capsids and cause premature capsid disassembly, leading to blocks in reverse transcription. Capsid restriction by TRIM5 is one of the factors which restricts HIV-1 to the human species. Host PIN1 apparently facilitates the virion uncoating. On the other hand, interactions with PDZD8 or CYPA stabilize the capsid. In terms of biological role, encapsulates and protects viral dimeric unspliced genomic RNA (gRNA). Binds these RNAs through its zinc fingers. Acts as a nucleic acid chaperone which is involved in rearangement of nucleic acid secondary structure during gRNA retrotranscription. Also facilitates template switch leading to recombination. As part of the polyprotein, participates in gRNA dimerization, packaging, tRNA incorporation and virion assembly. Functionally, aspartyl protease that mediates proteolytic cleavages of Gag and Gag-Pol polyproteins during or shortly after the release of the virion from the plasma membrane. Cleavages take place as an ordered, step-wise cascade to yield mature proteins. This process is called maturation. Displays maximal activity during the budding process just prior to particle release from the cell. Also cleaves Nef and Vif, probably concomitantly with viral structural proteins on maturation of virus particles. Hydrolyzes host EIF4GI and PABP1 in order to shut off the capped cellular mRNA translation. The resulting inhibition of cellular protein synthesis serves to ensure maximal viral gene expression and to evade host immune response. Also mediates cleavage of host YTHDF3. Mediates cleavage of host CARD8, thereby activating the CARD8 inflammasome, leading to the clearance of latent HIV-1 in patient CD4(+) T-cells after viral reactivation; in contrast, HIV-1 can evade CARD8-sensing when its protease remains inactive in infected cells prior to viral budding. Multifunctional enzyme that converts the viral RNA genome into dsDNA in the cytoplasm, shortly after virus entry into the cell. This enzyme displays a DNA polymerase activity that can copy either DNA or RNA templates, and a ribonuclease H (RNase H) activity that cleaves the RNA strand of RNA-DNA heteroduplexes in a partially processive 3' to 5' endonucleasic mode. Conversion of viral genomic RNA into dsDNA requires many steps. A tRNA(3)-Lys binds to the primer-binding site (PBS) situated at the 5'-end of the viral RNA. RT uses the 3' end of the tRNA primer to perform a short round of RNA-dependent minus-strand DNA synthesis. The reading proceeds through the U5 region and ends after the repeated (R) region which is present at both ends of viral RNA. The portion of the RNA-DNA heteroduplex is digested by the RNase H, resulting in a ssDNA product attached to the tRNA primer. This ssDNA/tRNA hybridizes with the identical R region situated at the 3' end of viral RNA. This template exchange, known as minus-strand DNA strong stop transfer, can be either intra- or intermolecular. RT uses the 3' end of this newly synthesized short ssDNA to perform the RNA-dependent minus-strand DNA synthesis of the whole template. RNase H digests the RNA template except for two polypurine tracts (PPTs) situated at the 5'-end and near the center of the genome. It is not clear if both polymerase and RNase H activities are simultaneous. RNase H probably can proceed both in a polymerase-dependent (RNA cut into small fragments by the same RT performing DNA synthesis) and a polymerase-independent mode (cleavage of remaining RNA fragments by free RTs). Secondly, RT performs DNA-directed plus-strand DNA synthesis using the PPTs that have not been removed by RNase H as primers. PPTs and tRNA primers are then removed by RNase H. The 3' and 5' ssDNA PBS regions hybridize to form a circular dsDNA intermediate. Strand displacement synthesis by RT to the PBS and PPT ends produces a blunt ended, linear dsDNA copy of the viral genome that includes long terminal repeats (LTRs) at both ends. Its function is as follows. Catalyzes viral DNA integration into the host chromosome, by performing a series of DNA cutting and joining reactions. This enzyme activity takes place after virion entry into a cell and reverse transcription of the RNA genome in dsDNA. The first step in the integration process is 3' processing. This step requires a complex comprising the viral genome, matrix protein, Vpr and integrase. This complex is called the pre-integration complex (PIC). The integrase protein removes 2 nucleotides from each 3' end of the viral DNA, leaving recessed CA OH's at the 3' ends. In the second step, the PIC enters cell nucleus. This process is mediated through integrase and Vpr proteins, and allows the virus to infect a non dividing cell. This ability to enter the nucleus is specific of lentiviruses, other retroviruses cannot and rely on cell division to access cell chromosomes. In the third step, termed strand transfer, the integrase protein joins the previously processed 3' ends to the 5' ends of strands of target cellular DNA at the site of integration. The 5'-ends are produced by integrase-catalyzed staggered cuts, 5 bp apart. A Y-shaped, gapped, recombination intermediate results, with the 5'-ends of the viral DNA strands and the 3' ends of target DNA strands remaining unjoined, flanking a gap of 5 bp. The last step is viral DNA integration into host chromosome. This involves host DNA repair synthesis in which the 5 bp gaps between the unjoined strands are filled in and then ligated. Since this process occurs at both cuts flanking the HIV genome, a 5 bp duplication of host DNA is produced at the ends of HIV-1 integration. Alternatively, Integrase may catalyze the excision of viral DNA just after strand transfer, this is termed disintegration. In Human immunodeficiency virus type 1 group M subtype B (isolate RF/HAT3) (HIV-1), this protein is Gag-Pol polyprotein (gag-pol).